The sequence spans 396 residues: Subtilisin-like protease 5 (396 aa).

The signal sequence occupies residues 1–20; the sequence is MTGFLTILSLSLAALSVTNA. Residues 21–116 constitute a propeptide that is removed on maturation; it reads AQILSVPQGA…VEPDAIIKQH (96 aa). An Inhibitor I9 domain is found at 37–114; it reads YIVVMKDDTS…AFVEPDAIIK (78 aa). Residues 125–396 form the Peptidase S8 domain; sequence PWGLSRLSNR…SRLLYNGSGR (272 aa). Catalysis depends on charge relay system residues Asp156 and His187. N-linked (GlcNAc...) asparagine glycans are attached at residues Asn230 and Asn248. Ser342 serves as the catalytic Charge relay system. Residues 376–396 are disordered; it reads PTIRNPGPDTTSRLLYNGSGR. An N-linked (GlcNAc...) asparagine glycan is attached at Asn392.

It belongs to the peptidase S8 family.

It is found in the secreted. Secreted subtilisin-like serine protease with keratinolytic activity that contributes to pathogenicity. This is Subtilisin-like protease 5 (SUB5) from Arthroderma gypseum (strain ATCC MYA-4604 / CBS 118893) (Microsporum gypseum).